The primary structure comprises 955 residues: 2-oxoglutarate dehydrogenase E1 component (955 aa).

This sequence belongs to the alpha-ketoglutarate dehydrogenase family. As to quaternary structure, homodimer. Part of the 2-oxoglutarate dehydrogenase (OGDH) complex composed of E1 (2-oxoglutarate dehydrogenase), E2 (dihydrolipoamide succinyltransferase) and E3 (dihydrolipoamide dehydrogenase); the complex contains multiple copies of the three enzymatic components (E1, E2 and E3). The cofactor is thiamine diphosphate.

The enzyme catalyses N(6)-[(R)-lipoyl]-L-lysyl-[protein] + 2-oxoglutarate + H(+) = N(6)-[(R)-S(8)-succinyldihydrolipoyl]-L-lysyl-[protein] + CO2. Functionally, E1 component of the 2-oxoglutarate dehydrogenase (OGDH) complex which catalyzes the decarboxylation of 2-oxoglutarate, the first step in the conversion of 2-oxoglutarate to succinyl-CoA and CO(2). This is 2-oxoglutarate dehydrogenase E1 component from Bacillus mycoides (strain KBAB4) (Bacillus weihenstephanensis).